A 1236-amino-acid polypeptide reads, in one-letter code: ATP-dependent helicase/nuclease subunit A (1236 aa).

The region spanning 4–473 (VKWTKEQQQA…VNLFKNFRSR (470 aa)) is the UvrD-like helicase ATP-binding domain. An ATP-binding site is contributed by 25-32 (AAAGSGKT). The 295-residue stretch at 512–806 (YEDKSLVGGP…RIMSIHKSKG (295 aa)) folds into the UvrD-like helicase C-terminal domain.

It belongs to the helicase family. AddA subfamily. As to quaternary structure, heterodimer of AddA and AddB/RexB. It depends on Mg(2+) as a cofactor.

It carries out the reaction Couples ATP hydrolysis with the unwinding of duplex DNA by translocating in the 3'-5' direction.. The enzyme catalyses ATP + H2O = ADP + phosphate + H(+). In terms of biological role, the heterodimer acts as both an ATP-dependent DNA helicase and an ATP-dependent, dual-direction single-stranded exonuclease. Recognizes the chi site generating a DNA molecule suitable for the initiation of homologous recombination. The AddA nuclease domain is required for chi fragment generation; this subunit has the helicase and 3' -&gt; 5' nuclease activities. In Clostridium novyi (strain NT), this protein is ATP-dependent helicase/nuclease subunit A.